The sequence spans 515 residues: Putative ribose/galactose/methyl galactoside import ATP-binding protein (515 aa).

ABC transporter domains lie at 26–262 (LEVA…VGRE) and 272–511 (VALG…KIMD). ATP is bound at residue 58–65 (GENGAGKS).

Belongs to the ABC transporter superfamily. Carbohydrate importer 2 (CUT2) (TC 3.A.1.2) family.

The protein localises to the cell inner membrane. It catalyses the reaction D-ribose(out) + ATP + H2O = D-ribose(in) + ADP + phosphate + H(+). It carries out the reaction D-galactose(out) + ATP + H2O = D-galactose(in) + ADP + phosphate + H(+). Functionally, part of an ABC transporter complex involved in carbohydrate import. Could be involved in ribose, galactose and/or methyl galactoside import. Responsible for energy coupling to the transport system. The chain is Putative ribose/galactose/methyl galactoside import ATP-binding protein from Hahella chejuensis (strain KCTC 2396).